Consider the following 194-residue polypeptide: Protein phosphatase 1 regulatory subunit 1B (194 aa).

An N-acetylmethionine modification is found at Met1. A disordered region spans residues 1–194 (MDPKDRKKIQ…GEEPQHPSPP (194 aa)). Thr34 bears the Phosphothreonine; by PKA mark. Positions 41–63 (VSEHSSPEEEASPHQRTSGEGHH) are enriched in basic and acidic residues. A phosphoserine mark is found at Ser45 and Ser46. Position 75 is a phosphothreonine (Thr75). The segment covering 84 to 95 (HLQTISNLSENQ) has biased composition (polar residues). Ser97 and Ser130 each carry phosphoserine. The span at 113–131 (QEDDEEDEDEEEDEEEDSQ) shows a compositional bias: acidic residues. Residues 160–170 (PPLDEPQRDGN) show a composition bias toward basic and acidic residues. At Ser192 the chain carries Phosphoserine.

It belongs to the protein phosphatase inhibitor 1 family. Post-translationally, dopamine- and cyclic AMP-regulated neuronal phosphoprotein. In terms of processing, phosphorylation of Thr-34 is required for activity.

It is found in the cytoplasm. Its function is as follows. Inhibitor of protein-phosphatase 1. The chain is Protein phosphatase 1 regulatory subunit 1B (Ppp1r1b) from Mus musculus (Mouse).